Consider the following 212-residue polypeptide: uncharacterized protein (212 aa).

S-adenosyl-L-methionine-binding residues include Gly-53, Glu-74, and Asp-96.

It belongs to the methyltransferase superfamily. YrrT family.

Functionally, could be a S-adenosyl-L-methionine-dependent methyltransferase. This is an uncharacterized protein from Anoxybacillus flavithermus (strain DSM 21510 / WK1).